Reading from the N-terminus, the 1873-residue chain is Voltage-dependent L-type calcium channel subunit alpha-1S (1873 aa).

Residues 1 to 23 are disordered; sequence MEPSSPQDEGLRKKQPKKPLPEV. Residues 1 to 51 lie on the Cytoplasmic side of the membrane; that stretch reads MEPSSPQDEGLRKKQPKKPLPEVLPRPPRALFCLTLQNPLRKACISIVEWK. Residues 38–337 form an I repeat; it reads NPLRKACISI…LVLGVLSGEF (300 aa). The helical transmembrane segment at 52–70 threads the bilayer; the sequence is PFETIILLTIFANCVALAV. The Extracellular segment spans residues 71–85; that stretch reads YLPMPEDDNNSLNLG. Asparagine 79 carries an N-linked (GlcNAc...) asparagine glycan. The helical transmembrane segment at 86 to 106 threads the bilayer; that stretch reads LEKLEYFFLTVFSIEAAMKII. The Cytoplasmic segment spans residues 107 to 115; that stretch reads AYGFLFHQD. A helical membrane pass occupies residues 116–136; the sequence is AYLRSGWNVLDFIIVFLGVFT. The Extracellular segment spans residues 137-160; the sequence is AILEQVNVIQSNTAPMSSKGAGLD. A helical transmembrane segment spans residues 161–179; sequence VKALRAFRVLRPLRLVSGV. Over 180–196 the chain is Cytoplasmic; that stretch reads PSLQVVLNSIFKAMLPL. Residues 197–218 traverse the membrane as a helical segment; the sequence is FHIALLVLFMVIIYAIIGLELF. Topologically, residues 219–279 are extracellular; that stretch reads KGKMHKTCYY…HGITHFDNFG (61 aa). Cystine bridges form between cysteine 226-cysteine 254 and cysteine 245-cysteine 261. An N-linked (GlcNAc...) asparagine glycan is attached at asparagine 257. Positions 280–301 form an intramembrane region, pore-forming; the sequence is FSMLTVYQCITMEGWTDVLYWV. The short motif at 290-293 is the Selectivity filter of repeat I element; that stretch reads TMEG. Glutamate 292 lines the Ca(2+) pocket. At 302–309 the chain is on the extracellular side; sequence NDAIGNEW. Residues 310–330 traverse the membrane as a helical segment; sequence PWIYFVTLILLGSFFILNLVL. Topologically, residues 331–432 are cytoplasmic; that stretch reads GVLSGEFTKE…WKCHDLVKSR (102 aa). The tract at residues 357-374 is binding to the beta subunit; the sequence is QQLEEDLRGYMSWITQGE. A phosphoserine mark is found at serine 393 and serine 397. The II repeat unit spans residues 418-664; the sequence is NRVFRWKCHD…VFLAIAVDNL (247 aa). The chain crosses the membrane as a helical span at residues 433–451; the sequence is VFYWLVILIVALNTLSIAS. Residues 452 to 462 are Extracellular-facing; the sequence is EHHNQPLWLTH. The chain crosses the membrane as a helical span at residues 463–483; sequence LQDIANRVLLSLFTIEMLLKM. At 484 to 494 the chain is on the cytoplasmic side; that stretch reads YGLGLRQYFMS. Residues 495-514 traverse the membrane as a helical segment; sequence IFNRFDCFVVCSGILELLLV. Residues 515–523 lie on the Extracellular side of the membrane; the sequence is ESGAMTPLG. Residues 524-542 traverse the membrane as a helical segment; the sequence is ISVLRCIRLLRLFKITKYW. Over 543–561 the chain is Cytoplasmic; sequence TSLSNLVASLLNSIRSIAS. Residues 562-581 form a helical membrane-spanning segment; sequence LLLLLFLFIIIFALLGMQLF. Residues 582 to 601 lie on the Extracellular side of the membrane; it reads GGRYDFEDTEVRRSNFDNFP. The pore-forming intramembrane region spans 602 to 623; that stretch reads QALISVFQVLTGEDWNSVMYNG. Residues 612–615 carry the Selectivity filter of repeat II motif; the sequence is TGED. Glutamate 614 contacts Ca(2+). The Extracellular segment spans residues 624–633; sequence IMAYGGPSYP. Residues 634 to 653 form a helical membrane-spanning segment; sequence GVLVCIYFIILFVCGNYILL. The Cytoplasmic portion of the chain corresponds to 654–799; sequence NVFLAIAVDN…VLCHRIVNAT (146 aa). Disordered stretches follow at residues 673–717 and 731–757; these read AQKA…IPTT and EVKD…VSPR. Serine 687 is subject to Phosphoserine; by PKA. Residues 690–711 show a composition bias toward basic and acidic residues; that stretch reads LPDKTEEEKSVMAKKLEQKPKG. Residues 742-751 are compositionally biased toward acidic residues; it reads PGDDEEDEPE. The interval 747–760 is interaction with STAC, STAC2 and STAC3 (via SH3 domains); sequence EDEPEIPVSPRPRP. One copy of the III repeat lies at 786–1068; sequence NKVRVLCHRI…IFVGFVIVTF (283 aa). Residues 800–818 form a helical membrane-spanning segment; that stretch reads WFTNFILLFILLSSAALAA. Residues 819–830 are Extracellular-facing; that stretch reads EDPIRAESVRNQ. The chain crosses the membrane as a helical span at residues 831-850; it reads ILGYFDIAFTSVFTVEIVLK. At 851–866 the chain is on the cytoplasmic side; the sequence is MTTYGAFLHKGSFCRN. The helical transmembrane segment at 867–885 threads the bilayer; that stretch reads YFNILDLLVVAVSLISMGL. Residues 886 to 892 lie on the Extracellular side of the membrane; it reads ESSTISV. Residues 893 to 911 traverse the membrane as a helical segment; the sequence is VKILRVLRVLRPLRAINRA. The Cytoplasmic segment spans residues 912–930; sequence KGLKHVVQCVFVAIRTIGN. Residues 931–950 traverse the membrane as a helical segment; that stretch reads IVLVTTLLQFMFACIGVQLF. Residues 951–1000 are Extracellular-facing; it reads KGKFFSCNDLSKMTEEECRGYYYVYKDGDPTQMELRPRQWIHNDFHFDNV. Cysteine 957 and cysteine 968 are disulfide-bonded. The dihydropyridine binding stretch occupies residues 988-1077; sequence RQWIHNDFHF…FQEQGETEYK (90 aa). The segment at residues 1001 to 1021 is an intramembrane region (pore-forming); the sequence is LSAMMSLFTVSTFEGWPQLLY. The short motif at 1012–1015 is the Selectivity filter of repeat III element; sequence TFEG. Glutamate 1014 lines the Ca(2+) pocket. The Extracellular segment spans residues 1022–1038; the sequence is RAIDSNEEDMGPVYNNR. The helical transmembrane segment at 1039 to 1060 threads the bilayer; it reads VEMAIFFIIYIILIAFFMMNIF. The Cytoplasmic portion of the chain corresponds to 1061–1118; that stretch reads VGFVIVTFQEQGETEYKNCELDKNQRQCVQYALKARPLRCYIPKNPYQYQVWYVVTSS. An IV repeat occupies 1105-1384; it reads NPYQYQVWYV…LFVAVIMDNF (280 aa). A helical membrane pass occupies residues 1119 to 1140; the sequence is YFEYLMFALIMLNTICLGMQHY. At 1141-1148 the chain is on the extracellular side; sequence HQSEEMNH. Residues 1149–1170 traverse the membrane as a helical segment; sequence ISDILNVAFTIIFTLEMILKLL. The Cytoplasmic segment spans residues 1171–1180; that stretch reads AFKARGYFGD. The helical transmembrane segment at 1181–1200 threads the bilayer; the sequence is PWNVFDFLIVIGSIIDVILS. Topologically, residues 1201–1231 are extracellular; sequence EIDTFLASSGGLYCLGGGCGNVDPDESARIS. The chain crosses the membrane as a helical span at residues 1232–1250; sequence SAFFRLFRVMRLIKLLSRA. Over 1251-1268 the chain is Cytoplasmic; it reads EGVRTLLWTFIKSFQALP. A helical transmembrane segment spans residues 1269–1289; it reads YVALLIVMLFFIYAVIGMQMF. At 1290–1311 the chain is on the extracellular side; that stretch reads GKIALVDGTQINRNNNFQTFPQ. An intramembrane region (pore-forming) is located at residues 1312–1330; sequence AVLLLFRCATGEAWQEILL. Residues 1321 to 1324 carry the Selectivity filter of repeat IV motif; sequence TGEA. The Extracellular segment spans residues 1331 to 1356; sequence ACSYGKLCDPESDYAPGEEYTCGTNF. Residues 1337–1403 form a dihydropyridine binding region; that stretch reads LCDPESDYAP…LGPHHLDEFK (67 aa). A disulfide bond links cysteine 1338 and cysteine 1352. Positions 1349–1391 are phenylalkylamine binding; sequence EYTCGTNFAYYYFISFYMLCAFLIINLFVAVIMDNFDYLTRDW. Residues 1357–1381 form a helical membrane-spanning segment; sequence AYYYFISFYMLCAFLIINLFVAVIM. Residues 1382-1873 lie on the Cytoplasmic side of the membrane; the sequence is DNFDYLTRDW…SQETLIPPRP (492 aa). Residues 1522 to 1542 are interaction with calmodulin; that stretch reads KFYATFLIQEHFRKFMKRQEE. Serine 1575 bears the Phosphoserine; by PKA and CAMK2 mark. Position 1579 is a phosphothreonine; by CK2 (threonine 1579). Serine 1617 is modified (phosphoserine; by PKA). Disordered stretches follow at residues 1689–1782 and 1841–1873; these read EFPG…RPAP and GMAS…PPRP. Residues 1847-1858 are compositionally biased toward low complexity; sequence GSLSRRSSLGSL.

Belongs to the calcium channel alpha-1 subunit (TC 1.A.1.11) family. CACNA1S subfamily. As to quaternary structure, component of a calcium channel complex consisting of a pore-forming alpha subunit (CACNA1S) and the ancillary subunits CACNB1 or CACNB2, CACNG1 and CACNA2D1. The channel complex contains alpha, beta, gamma and delta subunits in a 1:1:1:1 ratio, i.e. it contains either CACNB1 or CACNB2. CACNA1S channel activity is modulated by the auxiliary subunits (CACNB1 or CACNB2, CACNG1 and CACNA2D1). Interacts with DYSF and JSRP1. Interacts with RYR1. Interacts with STAC, STAC2 and STAC3 (via their SH3 domains). Interaction with STAC3 promotes expression at the cell membrane. Interaction with STAC2 promotes expression at the cell membrane, but with much lower efficiency than STAC3. Interaction with STAC1 leads to very low levels expression at the cell membrane, much less than the levels observed upon interaction with STAC3 and STAC2. Interacts with CALM. Post-translationally, the alpha-1S subunit is found in two isoforms in the skeletal muscle: a minor form of 212 kDa containing the complete amino acid sequence, and a major form of 190 kDa derived from the full-length form by post-translational proteolysis close to Phe-1690. Phosphorylated. Phosphorylation by PKA activates the calcium channel. Both the minor and major forms are phosphorylated in vitro by PKA. Phosphorylation at Ser-1575 is involved in beta-adrenergic-mediated regulation of the channel. Detected in skeletal muscle T-tubules (at protein level).

The protein localises to the cell membrane. It localises to the sarcolemma. Its subcellular location is the T-tubule. The catalysed reaction is Ca(2+)(in) = Ca(2+)(out). Its activity is regulated as follows. Channel activity is blocked by dihydropyridines (DHP), phenylalkylamines, and by benzothiazepines. Functionally, pore-forming, alpha-1S subunit of the voltage-gated calcium channel that gives rise to L-type calcium currents in skeletal muscle. Calcium channels containing the alpha-1S subunit play an important role in excitation-contraction coupling in skeletal muscle via their interaction with RYR1, which triggers Ca(2+) release from the sarcplasmic reticulum and ultimately results in muscle contraction. Long-lasting (L-type) calcium channels belong to the 'high-voltage activated' (HVA) group. In Oryctolagus cuniculus (Rabbit), this protein is Voltage-dependent L-type calcium channel subunit alpha-1S (CACNA1S).